Consider the following 166-residue polypeptide: Ribosome maturation factor RimM (166 aa).

The 73-residue stretch at 92–164 (EGVYYDFQLI…KIIIDPIPGL (73 aa)) folds into the PRC barrel domain.

Belongs to the RimM family. In terms of assembly, binds ribosomal protein uS19.

It localises to the cytoplasm. Its function is as follows. An accessory protein needed during the final step in the assembly of 30S ribosomal subunit, possibly for assembly of the head region. Essential for efficient processing of 16S rRNA. May be needed both before and after RbfA during the maturation of 16S rRNA. It has affinity for free ribosomal 30S subunits but not for 70S ribosomes. In Dehalococcoides mccartyi (strain CBDB1), this protein is Ribosome maturation factor RimM.